Consider the following 278-residue polypeptide: Ribosomal RNA small subunit methyltransferase A (278 aa).

N18, L20, G45, E66, D89, and N110 together coordinate S-adenosyl-L-methionine.

This sequence belongs to the class I-like SAM-binding methyltransferase superfamily. rRNA adenine N(6)-methyltransferase family. RsmA subfamily.

It localises to the cytoplasm. It catalyses the reaction adenosine(1518)/adenosine(1519) in 16S rRNA + 4 S-adenosyl-L-methionine = N(6)-dimethyladenosine(1518)/N(6)-dimethyladenosine(1519) in 16S rRNA + 4 S-adenosyl-L-homocysteine + 4 H(+). Functionally, specifically dimethylates two adjacent adenosines (A1518 and A1519) in the loop of a conserved hairpin near the 3'-end of 16S rRNA in the 30S particle. May play a critical role in biogenesis of 30S subunits. The chain is Ribosomal RNA small subunit methyltransferase A from Cupriavidus metallidurans (strain ATCC 43123 / DSM 2839 / NBRC 102507 / CH34) (Ralstonia metallidurans).